The following is a 453-amino-acid chain: UPF0210 protein Mbar_A3181 (453 aa).

This sequence belongs to the UPF0210 family.

The chain is UPF0210 protein Mbar_A3181 from Methanosarcina barkeri (strain Fusaro / DSM 804).